A 166-amino-acid chain; its full sequence is Nascent polypeptide-associated complex subunit beta (166 aa).

2 disordered regions span residues 1-40 (MVLN…EDPK) and 129-166 (HAAS…DKLD). The NAC-A/B domain maps to 35-100 (GGEDPKLQAA…GVDKELTELV (66 aa)). Residues 141–153 (DDDDVPDVVENFD) are compositionally biased toward acidic residues. Over residues 154 to 166 (EADKKETEVDKLD) the composition is skewed to basic and acidic residues.

Belongs to the NAC-beta family. Part of the nascent polypeptide-associated complex (NAC), consisting of EGD2 and EGD1. NAC associates with ribosomes via EGD1.

It localises to the cytoplasm. The protein localises to the nucleus. Component of the nascent polypeptide-associated complex (NAC), a dynamic component of the ribosomal exit tunnel, protecting the emerging polypeptides from interaction with other cytoplasmic proteins to ensure appropriate nascent protein targeting. The NAC complex also promotes mitochondrial protein import by enhancing productive ribosome interactions with the outer mitochondrial membrane and blocks the inappropriate interaction of ribosomes translating non-secretory nascent polypeptides with translocation sites in the membrane of the endoplasmic reticulum. EGD1 may act as a transcription factor that exert a negative effect on the expression of several genes that are transcribed by RNA polymerase II. In Mycosarcoma maydis (Corn smut fungus), this protein is Nascent polypeptide-associated complex subunit beta (EGD1).